The primary structure comprises 707 residues: Early transcription factor 82 kDa subunit (707 aa).

The protein belongs to the poxviridae VETF large subunit family. Heterodimer of a 70 kDa and a 82 kDa subunit. Part of the early transcription complex composed of ETF, RAP94, and the DNA-directed RNA polymerase.

The protein localises to the virion. In terms of biological role, acts with RNA polymerase to initiate transcription from early gene promoters. Is recruited by the RPO-associated protein of 94 kDa (RAP94) to form the early transcription complex, which also contains the core RNA polymerase. ETF heterodimer binds to early gene promoters. In Molluscum contagiosum virus subtype 1 (MOCV), this protein is Early transcription factor 82 kDa subunit (VETFL).